A 667-amino-acid polypeptide reads, in one-letter code: Sorting nexin mvp1 (667 aa).

The interval 221-268 (AGNLHSQQPPKFSVDSSVDDNAITPRKPFSKIPNRLSPSTQPLLSNSR) is disordered. Positions 224–236 (LHSQQPPKFSVDS) are enriched in polar residues. In terms of domain architecture, PX spans 279–398 (TSFPASLEMN…RVFFTEPNVF (120 aa)). Positions 320, 322, and 346 each coordinate a 1,2-diacyl-sn-glycero-3-phospho-(1D-myo-inositol-3-phosphate). The tract at residues 574 to 594 (ANSDESGRNRTFLNRSSKKRA) is disordered.

This sequence belongs to the sorting nexin family. In terms of assembly, homodimer. Forms an autoinhibited tetramer consisting of 2 homodimers that self-interact, wherein the membrane-interacting BAR surfaces are sequestered and the PX lipid-binding sites are occluded. Interacts with Vps1.

The protein localises to the cytoplasm. It localises to the endosome membrane. Required for vacuolar protein sorting. Component of the retromer-mediated endosome-to-Golgi retrograde pathway. Required for efficient cargo export from the endosome, promoting Vps1-mediated fission of retromer-coated tubules that bud from the endosome. The sequence is that of Sorting nexin mvp1 (mvp1) from Schizosaccharomyces pombe (strain 972 / ATCC 24843) (Fission yeast).